We begin with the raw amino-acid sequence, 173 residues long: Translation initiation factor IF-3 (173 aa).

This sequence belongs to the IF-3 family. Monomer.

The protein localises to the cytoplasm. Functionally, IF-3 binds to the 30S ribosomal subunit and shifts the equilibrium between 70S ribosomes and their 50S and 30S subunits in favor of the free subunits, thus enhancing the availability of 30S subunits on which protein synthesis initiation begins. The polypeptide is Translation initiation factor IF-3 (Lactiplantibacillus plantarum (strain ATCC BAA-793 / NCIMB 8826 / WCFS1) (Lactobacillus plantarum)).